Here is a 480-residue protein sequence, read N- to C-terminus: MREEREDMLSWPLIGEKEKRSRFVKEEVEKQLLLSGPLIAVSLLQFCLQIISVMFVGHLGSLPLSAASIATSFASVTGFTFLMGTASAMDTVCGQSYGAKMYGMLGIQMQRAMLVLTLLSVPLSIVWANTEHFLVFFGQDKSIAHLSGSYARFMIPSIFAYGLLQCLNRFLQAQNNVIPVVICSGVTTSLHVIICWVLVLKSGLGFRGAAVANAISYWLNVILLSCYVKFSPSCSLTWTGFSKEARRDIIPFMKLVIPSAFMVCSLEMWSFELLVLSSGLLPNPVLETSCPRTVWMIPFGLSGAASTRVSNELGSGNPKGAKLAVRVVLSFSIVESILVGTVLILIRKIWGFAYSSDPEVVSHVASMLPILALGHSLDSFQTVLSGVARGCGWQKIGAFVNLGSYYLVGVPFGLLLGFHFHVGGRGLWLGIICALIVQGVCLSLITFFTNWDEEVKKATSRAKSSSEVKEFAVDNGSILV.

12 helical membrane-spanning segments follow: residues 36–56 (GPLI…VMFV), 69–89 (IATS…ASAM), 118–138 (LLSV…VFFG), 143–163 (IAHL…AYGL), 180–200 (VVIC…VLVL), 208–228 (GAAV…SCYV), 255–275 (LVIP…ELLV), 294–314 (VWMI…NELG), 326–346 (RVVL…LILI), 360–380 (VVSH…LDSF), 396–416 (IGAF…GLLL), and 428–448 (WLGI…ITFF).

This sequence belongs to the multi antimicrobial extrusion (MATE) (TC 2.A.66.1) family.

It is found in the membrane. In Arabidopsis thaliana (Mouse-ear cress), this protein is Protein DETOXIFICATION 15.